Here is a 231-residue protein sequence, read N- to C-terminus: MAKDTTGRMHVQVKTGGKRKLSSKLWLERQLNDPYVAQAKRDGYRSRATYKLIEIDDKYHLLKPGMTVVDLGAAPGGWSQIAARRVGAEAGKGKVIAIDLLEMGEVPGVTFTQMDFHAQDAPEKLRAMLGGRADVVMSDMAANTTGHRKTDQLRIVGLVELAAHFAGEVLKPGGSFLAKTFQSGADAELLAQLKRDYATVRHVKPAASRQDSSERYVLAMGFRGGEPAELL.

S-adenosyl-L-methionine contacts are provided by Gly-76, Trp-78, Asp-99, Asp-115, and Asp-139. Lys-179 serves as the catalytic Proton acceptor.

It belongs to the class I-like SAM-binding methyltransferase superfamily. RNA methyltransferase RlmE family.

It localises to the cytoplasm. The catalysed reaction is uridine(2552) in 23S rRNA + S-adenosyl-L-methionine = 2'-O-methyluridine(2552) in 23S rRNA + S-adenosyl-L-homocysteine + H(+). Functionally, specifically methylates the uridine in position 2552 of 23S rRNA at the 2'-O position of the ribose in the fully assembled 50S ribosomal subunit. The chain is Ribosomal RNA large subunit methyltransferase E from Bradyrhizobium sp. (strain BTAi1 / ATCC BAA-1182).